A 475-amino-acid chain; its full sequence is Aspartic proteinase 39 (475 aa).

The signal sequence occupies residues 1-23; that stretch reads MELRRKLCIVVAVFVIVIEFASA. A Peptidase A1 domain is found at 74-422; the sequence is YFTKIKLGSP…DLDNEVIGWA (349 aa). Residue Asp-92 is part of the active site. Asn-124 and Asn-222 each carry an N-linked (GlcNAc...) asparagine glycan. Asp-303 is a catalytic residue. 2 N-linked (GlcNAc...) asparagine glycosylation sites follow: Asn-425 and Asn-446. Ser-449 is lipidated: GPI-anchor amidated serine. The propeptide at 450-475 is removed in mature form; the sequence is APRLLMITKLLTILSPLIVMAFTSLA.

This sequence belongs to the peptidase A1 family. Highly expressed in pollen and pollen tubes. Mostly expressed in inflorescence, flowers and siliques, and barely in leaves and seedlings.

Its subcellular location is the cell membrane. It localises to the cytoplasm. It is found in the cytosol. Functionally, displays aspartic proteolytic activity. Together with A36, contributes to pollen and ovule development, including the apical cell wall constitution of the growing pollen tubes. The chain is Aspartic proteinase 39 from Arabidopsis thaliana (Mouse-ear cress).